The following is a 267-amino-acid chain: uncharacterized protein (267 aa).

Residues 37–62 (DSSNNYKKKYKKYKRKYIDLKKQLNY) are a coiled coil.

This is an uncharacterized protein from Acanthamoeba polyphaga (Amoeba).